We begin with the raw amino-acid sequence, 401 residues long: Pectate lyase (401 aa).

The N-terminal stretch at 1-20 is a signal peptide; the sequence is MATTILPLILFISSLAIASS. Asn-38 carries N-linked (GlcNAc...) asparagine glycosylation. Ca(2+) is bound by residues Asp-199, Asp-223, and Asp-227. Arg-279 is an active-site residue.

It belongs to the polysaccharide lyase 1 family. The cofactor is Ca(2+). Expressed in sites of vascular differentiation and in new primordia on the flank of the shoot meristem.

It carries out the reaction Eliminative cleavage of (1-&gt;4)-alpha-D-galacturonan to give oligosaccharides with 4-deoxy-alpha-D-galact-4-enuronosyl groups at their non-reducing ends.. Its pathway is glycan metabolism; pectin degradation; 2-dehydro-3-deoxy-D-gluconate from pectin: step 2/5. Functionally, involved in the degradation of pectin. May assist in the removal and modification of an existing pectin matrix in order to allow the deposition of newly synthesized walls polymers for a specialized function or to create an architecture that is extensible. This chain is Pectate lyase, found in Zinnia elegans (Garden zinnia).